Reading from the N-terminus, the 293-residue chain is Protein Pat (293 aa).

Residues 187 to 287 form the BEN domain; that stretch reads LPDIILNPLD…LLLRTRQDRA (101 aa).

In terms of assembly, interacts with poc1b. As to expression, an mRNA and protein component of germ plasm and primordial germ cells (PGCs) throughout oogenesis and early development, being first localized to the granulo-fibrillar material (GFM) of the mitochondrial cloud in stage I and II oocytes and to the periphery of mature germinal granules both in oocytes and in embryos. Shows some somatic expression including the ectodermal cells of tailbud embryos. In adults, only expressed in ovaries.

It is found in the cytoplasm. The protein localises to the nucleus. Its function is as follows. Probably plays a role in germ plasm formation, positioning and maintenance. In Xenopus laevis (African clawed frog), this protein is Protein Pat.